A 216-amino-acid chain; its full sequence is Uracil phosphoribosyltransferase (216 aa).

Residues Arg85, Arg110, and 135–143 (DPMVATGYS) each bind 5-phospho-alpha-D-ribose 1-diphosphate. Residues Ile200 and 205-207 (GDA) each bind uracil. Asp206 contributes to the 5-phospho-alpha-D-ribose 1-diphosphate binding site.

This sequence belongs to the UPRTase family. The cofactor is Mg(2+).

The catalysed reaction is UMP + diphosphate = 5-phospho-alpha-D-ribose 1-diphosphate + uracil. It functions in the pathway pyrimidine metabolism; UMP biosynthesis via salvage pathway; UMP from uracil: step 1/1. With respect to regulation, allosterically activated by GTP. Functionally, catalyzes the conversion of uracil and 5-phospho-alpha-D-ribose 1-diphosphate (PRPP) to UMP and diphosphate. The chain is Uracil phosphoribosyltransferase from Ralstonia pickettii (strain 12J).